The sequence spans 348 residues: Aspartate carbamoyltransferase catalytic subunit (348 aa).

Carbamoyl phosphate contacts are provided by Arg-59 and Thr-60. Lys-87 serves as a coordination point for L-aspartate. Carbamoyl phosphate contacts are provided by Arg-109, His-142, and Gln-145. Positions 182 and 253 each coordinate L-aspartate. 2 residues coordinate carbamoyl phosphate: Gly-294 and Pro-295.

This sequence belongs to the aspartate/ornithine carbamoyltransferase superfamily. ATCase family. As to quaternary structure, heterododecamer (2C3:3R2) of six catalytic PyrB chains organized as two trimers (C3), and six regulatory PyrI chains organized as three dimers (R2).

The enzyme catalyses carbamoyl phosphate + L-aspartate = N-carbamoyl-L-aspartate + phosphate + H(+). It functions in the pathway pyrimidine metabolism; UMP biosynthesis via de novo pathway; (S)-dihydroorotate from bicarbonate: step 2/3. Its function is as follows. Catalyzes the condensation of carbamoyl phosphate and aspartate to form carbamoyl aspartate and inorganic phosphate, the committed step in the de novo pyrimidine nucleotide biosynthesis pathway. The polypeptide is Aspartate carbamoyltransferase catalytic subunit (Prochlorococcus marinus (strain MIT 9313)).